The following is a 200-amino-acid chain: Pyridoxal 5'-phosphate synthase subunit PdxT (200 aa).

52–54 (GES) contributes to the L-glutamine binding site. Cys-84 acts as the Nucleophile in catalysis. Residues Arg-116 and 145–146 (IR) contribute to the L-glutamine site. Active-site charge relay system residues include His-181 and Glu-183.

It belongs to the glutaminase PdxT/SNO family. As to quaternary structure, in the presence of PdxS, forms a dodecamer of heterodimers. Only shows activity in the heterodimer.

It carries out the reaction aldehydo-D-ribose 5-phosphate + D-glyceraldehyde 3-phosphate + L-glutamine = pyridoxal 5'-phosphate + L-glutamate + phosphate + 3 H2O + H(+). It catalyses the reaction L-glutamine + H2O = L-glutamate + NH4(+). Its pathway is cofactor biosynthesis; pyridoxal 5'-phosphate biosynthesis. Functionally, catalyzes the hydrolysis of glutamine to glutamate and ammonia as part of the biosynthesis of pyridoxal 5'-phosphate. The resulting ammonia molecule is channeled to the active site of PdxS. This Saccharolobus solfataricus (strain ATCC 35092 / DSM 1617 / JCM 11322 / P2) (Sulfolobus solfataricus) protein is Pyridoxal 5'-phosphate synthase subunit PdxT.